We begin with the raw amino-acid sequence, 222 residues long: Small ribosomal subunit protein uS3 (222 aa).

The KH type-2 domain maps to 39-108; sequence IRRHIKEKLY…TISLDIKEIK (70 aa).

This sequence belongs to the universal ribosomal protein uS3 family. In terms of assembly, part of the 30S ribosomal subunit. Forms a tight complex with proteins S10 and S14.

In terms of biological role, binds the lower part of the 30S subunit head. Binds mRNA in the 70S ribosome, positioning it for translation. This Caldicellulosiruptor saccharolyticus (strain ATCC 43494 / DSM 8903 / Tp8T 6331) protein is Small ribosomal subunit protein uS3.